Here is a 361-residue protein sequence, read N- to C-terminus: GDSL esterase/lipase At2g40250 (361 aa).

Residues 1-28 (MNRNQHKPMFVTFLINILLLQLLNLTNA) form the signal peptide. The active-site Nucleophile is Ser43. Active-site residues include Asp337 and His340.

The protein belongs to the 'GDSL' lipolytic enzyme family.

It localises to the secreted. This is GDSL esterase/lipase At2g40250 from Arabidopsis thaliana (Mouse-ear cress).